The primary structure comprises 69 residues: Putative transmembrane protein ORF34 (69 aa).

The next 2 membrane-spanning stretches (helical) occupy residues 7 to 27 and 42 to 62; these read LLSVLAIIFYGVMVVGSMMQF and VSLMLVGICAVVCFYASIVYF.

The protein localises to the host membrane. This chain is Putative transmembrane protein ORF34, found in Haloarcula hispanica (His1V).